Consider the following 207-residue polypeptide: LexA repressor (207 aa).

A DNA-binding region (H-T-H motif) is located at residues 28–48; that stretch reads VREIGEAVGLASSSTVHGHLS. Residues serine 129 and lysine 167 each act as for autocatalytic cleavage activity in the active site.

Belongs to the peptidase S24 family. Homodimer.

It catalyses the reaction Hydrolysis of Ala-|-Gly bond in repressor LexA.. Represses a number of genes involved in the response to DNA damage (SOS response), including recA and lexA. In the presence of single-stranded DNA, RecA interacts with LexA causing an autocatalytic cleavage which disrupts the DNA-binding part of LexA, leading to derepression of the SOS regulon and eventually DNA repair. This chain is LexA repressor, found in Halalkalibacterium halodurans (strain ATCC BAA-125 / DSM 18197 / FERM 7344 / JCM 9153 / C-125) (Bacillus halodurans).